The primary structure comprises 254 residues: Protein Thf1 (254 aa).

The stretch at 183–217 (SDKLQKDLDLYRSNLEKMEQARITMEEAIQADRRK) forms a coiled coil. Basic and acidic residues predominate over residues 213–227 (ADRRKREQREQEKLA). The interval 213–254 (ADRRKREQREQEKLAKAAAAEAPAALEASSDNPEPETSETPS) is disordered. The segment covering 228–240 (KAAAAEAPAALEA) has biased composition (low complexity). Residues 245 to 254 (PEPETSETPS) are compositionally biased toward acidic residues.

It belongs to the THF1 family.

Its function is as follows. May be involved in photosynthetic membrane biogenesis. The sequence is that of Protein Thf1 from Synechococcus elongatus (strain ATCC 33912 / PCC 7942 / FACHB-805) (Anacystis nidulans R2).